We begin with the raw amino-acid sequence, 704 residues long: Elongation factor G (704 aa).

The tr-type G domain occupies 8 to 290; it reads ARYRNIGISA…AVIDYLPSPV (283 aa). GTP contacts are provided by residues 17-24, 88-92, and 142-145; these read AHIDAGKT, DTPGH, and NKMD.

It belongs to the TRAFAC class translation factor GTPase superfamily. Classic translation factor GTPase family. EF-G/EF-2 subfamily.

It is found in the cytoplasm. Its function is as follows. Catalyzes the GTP-dependent ribosomal translocation step during translation elongation. During this step, the ribosome changes from the pre-translocational (PRE) to the post-translocational (POST) state as the newly formed A-site-bound peptidyl-tRNA and P-site-bound deacylated tRNA move to the P and E sites, respectively. Catalyzes the coordinated movement of the two tRNA molecules, the mRNA and conformational changes in the ribosome. This Cronobacter sakazakii (strain ATCC BAA-894) (Enterobacter sakazakii) protein is Elongation factor G.